A 254-amino-acid chain; its full sequence is 4-hydroxy-tetrahydrodipicolinate reductase (254 aa).

NAD(+) contacts are provided by residues 8–13 (GCSGKM), Asp35, 86–88 (CST), and 110–113 (SANM). Catalysis depends on His143, which acts as the Proton donor/acceptor. His144 is a (S)-2,3,4,5-tetrahydrodipicolinate binding site. Residue Lys147 is the Proton donor of the active site. 153 to 154 (GT) lines the (S)-2,3,4,5-tetrahydrodipicolinate pocket.

This sequence belongs to the DapB family.

The protein resides in the cytoplasm. It carries out the reaction (S)-2,3,4,5-tetrahydrodipicolinate + NAD(+) + H2O = (2S,4S)-4-hydroxy-2,3,4,5-tetrahydrodipicolinate + NADH + H(+). It catalyses the reaction (S)-2,3,4,5-tetrahydrodipicolinate + NADP(+) + H2O = (2S,4S)-4-hydroxy-2,3,4,5-tetrahydrodipicolinate + NADPH + H(+). Its pathway is amino-acid biosynthesis; L-lysine biosynthesis via DAP pathway; (S)-tetrahydrodipicolinate from L-aspartate: step 4/4. In terms of biological role, catalyzes the conversion of 4-hydroxy-tetrahydrodipicolinate (HTPA) to tetrahydrodipicolinate. The polypeptide is 4-hydroxy-tetrahydrodipicolinate reductase (Clostridium perfringens (strain SM101 / Type A)).